The chain runs to 134 residues: uncharacterized protein (134 aa).

The tract at residues 1 to 30 (MGTLQGAALRSRERPSWPQETHGHRERTEE) is disordered. Positions 10 to 30 (RSRERPSWPQETHGHRERTEE) are enriched in basic and acidic residues.

This is an uncharacterized protein from Homo sapiens (Human).